The following is a 436-amino-acid chain: Peptidase B (436 aa).

Mn(2+) is bound by residues lysine 201 and aspartate 206. Lysine 213 is an active-site residue. Residues aspartate 224, aspartate 283, and glutamate 285 each contribute to the Mn(2+) site. Arginine 287 is a catalytic residue.

This sequence belongs to the peptidase M17 family. In terms of assembly, homohexamer. The cofactor is Mn(2+).

The protein resides in the cytoplasm. It catalyses the reaction Release of an N-terminal amino acid, Xaa, from a peptide or arylamide. Xaa is preferably Glu or Asp but may be other amino acids, including Leu, Met, His, Cys and Gln.. Probably plays an important role in intracellular peptide degradation. The chain is Peptidase B from Pectobacterium carotovorum subsp. carotovorum (strain PC1).